The following is a 426-amino-acid chain: Chordin-like protein 2 (426 aa).

Positions 1–25 are cleaved as a signal peptide; sequence MVPGVRIIPSLLGLVMFWLPLDSQA. VWFC domains are found at residues 31–96 and 109–175; these read KVCL…PRCV and KSCQ…QTCK. N114 carries N-linked (GlcNAc...) asparagine glycosylation. S182 is subject to Phosphoserine. The span at 182–191 shows a compositional bias: polar residues; that stretch reads STEENLTQLQ. The interval 182–216 is disordered; it reads STEENLTQLQHGERHSQDPCSERRGPSTPAPTSLS. N-linked (GlcNAc...) asparagine glycosylation is present at N186. A compositionally biased stretch (basic and acidic residues) spans 192–206; the sequence is HGERHSQDPCSERRG. Residues 207-216 show a composition bias toward low complexity; that stretch reads PSTPAPTSLS. Residues 246–311 enclose the VWFC 3 domain; it reads KACTHNGKTY…VAGKCCKICP (66 aa).

In terms of assembly, interacts with GDF5. May interact with INHBA, BMP2, BMP4, BMP5, BMP6, and BMP7. Weakly expressed in the liver and kidney. In reproductive organs expressed in connective tissues such as ligaments of the ovary and oviduct in females, and of testis, epididymis and certain male accessory sex glands in males. Expression was high in uterine myometrium. Weakly expressed in cartilage of the femoral head, patella, articular facets of vertebrae, in the annulus fibrosus of intervertebral disks. In normal cartilage, expression was confined to articular chondrocytes especially in the superficial zone.

Its subcellular location is the secreted. Functionally, implicated in tumor angiogenesis. May inhibits BMPs activity by blocking their interaction with their receptors. Has a negative regulator effect on the cartilage formation/regeneration from immature mesenchymal cells, by preventing or reducing the rate of matrix accumulation. May play a role during myoblast and osteoblast differentiation, and maturation. This chain is Chordin-like protein 2 (Chrdl2), found in Mus musculus (Mouse).